The following is a 66-amino-acid chain: uncharacterized protein (66 aa).

A compositionally biased stretch (low complexity) spans 1 to 20 (MTIINSISNFGSNNSFSNNN). Residues 1–47 (MTIINSISNFGSNNSFSNNNTVNQKSVIKRSKQMKNDNTSIGSSFKN) are disordered. The span at 36-47 (NDNTSIGSSFKN) shows a compositional bias: polar residues.

This is an uncharacterized protein from Dictyostelium discoideum (Social amoeba).